The primary structure comprises 410 residues: Chloride intracellular channel protein 5 (410 aa).

The short motif at 191–194 (CPFS) is the G-site element. The helical transmembrane segment at 193-213 (FSQRLFMILWLKGVVFNVTTV) threads the bilayer. The GST C-terminal domain maps to 260 to 400 (YPKLAAKHRE…AADSEIELAY (141 aa)).

This sequence belongs to the chloride channel CLIC family. In terms of assembly, component of a multimeric complex consisting of several cytoskeletal proteins, including actin, ezrin, alpha-actinin, gelsolin, and IQGAP1. Interacts with AKAP9. Interacts with TPRN. TPRN, CLIC5 and PTPQR form concentric rings at the base of stereocilia and may form a complex. Interacts with EZR, MYO6 and RDX; the proteins may work together as a complex to stabilize linkages between the plasma membrane and subjacent actin cytoskeleton at the stereocilium base. As to expression, widely expressed in both fetal and adult human tissues. Isoform 1 is expressed in renal glomeruli endothelial cells and podocytes (at protein level).

The protein resides in the cytoplasm. Its subcellular location is the cytoskeleton. The protein localises to the cell cortex. It is found in the membrane. It localises to the apical cell membrane. The protein resides in the mitochondrion. Its subcellular location is the cell projection. The protein localises to the stereocilium. It is found in the golgi apparatus. It localises to the microtubule organizing center. The protein resides in the centrosome. It carries out the reaction chloride(in) = chloride(out). It catalyses the reaction Na(+)(in) = Na(+)(out). The catalysed reaction is K(+)(in) = K(+)(out). Inhibited by F-actin. In terms of biological role, in the soluble state, catalyzes glutaredoxin-like thiol disulfide exchange reactions with reduced glutathione as electron donor. Can insert into membranes and form non-selective ion channels almost equally permeable to Na(+), K(+) and Cl(-). Required for normal hearing. It is necessary for the formation of stereocilia in the inner ear and normal development of the organ of Corti. May play a role in the regulation of transepithelial ion absorption and secretion. Is required for the development and/or maintenance of the proper glomerular endothelial cell and podocyte architecture. Plays a role in formation of the lens suture in the eye, which is important for normal optical properties of the lens. In Homo sapiens (Human), this protein is Chloride intracellular channel protein 5.